Here is a 444-residue protein sequence, read N- to C-terminus: Glutamate--tRNA ligase 1 (444 aa).

A 'HIGH' region motif is present at residues 8–18 (PSPTGFLHVGN). The short motif at 239-243 (KISKR) is the 'KMSKS' region element. K242 is a binding site for ATP.

It belongs to the class-I aminoacyl-tRNA synthetase family. Glutamate--tRNA ligase type 1 subfamily. In terms of assembly, monomer.

The protein resides in the cytoplasm. It catalyses the reaction tRNA(Glu) + L-glutamate + ATP = L-glutamyl-tRNA(Glu) + AMP + diphosphate. In terms of biological role, catalyzes the attachment of glutamate to tRNA(Glu) in a two-step reaction: glutamate is first activated by ATP to form Glu-AMP and then transferred to the acceptor end of tRNA(Glu). This Zymomonas mobilis subsp. mobilis (strain ATCC 31821 / ZM4 / CP4) protein is Glutamate--tRNA ligase 1.